The following is a 49-amino-acid chain: Osteocalcin (49 aa).

At Q1 the chain carries Pyrrolidone carboxylic acid. Positions 1 to 47 constitute a Gla domain; it reads QLINGQGAPAPYPDPLEPKREVCELNPDCDELADQVGLQDAYQRFYG. 4-hydroxyproline is present on P9. Ca(2+)-binding residues include E17, E21, E24, and D30. E17, E21, and E24 each carry 4-carboxyglutamate. A disulfide bridge connects residues C23 and C29.

This sequence belongs to the osteocalcin/matrix Gla protein family. Post-translationally, gamma-carboxyglutamate residues are formed by vitamin K dependent carboxylation by GGCX. These residues are essential for the binding of calcium. Decarboxylation promotes the hormone activity.

Its subcellular location is the secreted. In terms of biological role, the carboxylated form is one of the main organic components of the bone matrix, which constitutes 1-2% of the total bone protein: it acts as a negative regulator of bone formation and is required to limit bone formation without impairing bone resorption or mineralization. The carboxylated form binds strongly to apatite and calcium. The uncarboxylated form acts as a hormone secreted by osteoblasts, which regulates different cellular processes, such as energy metabolism, male fertility and brain development. Regulates of energy metabolism by acting as a hormone favoring pancreatic beta-cell proliferation, insulin secretion and sensitivity and energy expenditure. Uncarboxylated osteocalcin hormone also promotes testosterone production in the testes: acts as a ligand for G protein-coupled receptor GPRC6A at the surface of Leydig cells, initiating a signaling response that promotes the expression of enzymes required for testosterone synthesis in a CREB-dependent manner. Also acts as a regulator of brain development: osteocalcin hormone crosses the blood-brain barrier and acts as a ligand for GPR158 on neurons, initiating a signaling response that prevents neuronal apoptosis in the hippocampus, favors the synthesis of all monoamine neurotransmitters and inhibits that of gamma-aminobutyric acid (GABA). Osteocalcin also crosses the placenta during pregnancy and maternal osteocalcin is required for fetal brain development. The protein is Osteocalcin (BGLAP) of Oryctolagus cuniculus (Rabbit).